The following is a 334-amino-acid chain: D-aspartate oxidase 1 (334 aa).

FAD contacts are provided by D35, R36, S43, G307, and T312. The Microbody targeting signal signature appears at S332–L334.

This sequence belongs to the DAMOX/DASOX family. Requires FAD as cofactor. In terms of tissue distribution, expressed in the intestinal cells, hypodermis and in unidentified cells in the head in adult hermaphrodites.

It is found in the peroxisome matrix. The enzyme catalyses D-aspartate + O2 + H2O = oxaloacetate + H2O2 + NH4(+). It carries out the reaction D-glutamate + O2 + H2O = H2O2 + 2-oxoglutarate + NH4(+). Its activity is regulated as follows. Not inhibited by potassium bromide or thiolactomycin. Selectively catalyzes the oxidative deamination of acidic amino acids. May play a role in the egg-laying events and early development of the worm, in addition to quality control of the germ cells. This Caenorhabditis elegans protein is D-aspartate oxidase 1 (ddo-1).